The sequence spans 136 residues: Ribosome-binding factor A (136 aa).

Positions 1–22 (MNTAGPAGKLAGHAASGPTQRQ) are disordered.

The protein belongs to the RbfA family. In terms of assembly, monomer. Binds 30S ribosomal subunits, but not 50S ribosomal subunits or 70S ribosomes.

The protein resides in the cytoplasm. In terms of biological role, one of several proteins that assist in the late maturation steps of the functional core of the 30S ribosomal subunit. Associates with free 30S ribosomal subunits (but not with 30S subunits that are part of 70S ribosomes or polysomes). Required for efficient processing of 16S rRNA. May interact with the 5'-terminal helix region of 16S rRNA. In Gluconacetobacter diazotrophicus (strain ATCC 49037 / DSM 5601 / CCUG 37298 / CIP 103539 / LMG 7603 / PAl5), this protein is Ribosome-binding factor A.